We begin with the raw amino-acid sequence, 285 residues long: Tetraspanin-3 (285 aa).

Topologically, residues 1 to 6 (MRTSNH) are cytoplasmic. Residues 7–27 (LIGLVNFLTFLLSIPILGGGI) traverse the membrane as a helical segment. Residues 28–43 (WLSSRANSTDCLRFLQ) lie on the Extracellular side of the membrane. Asn-34 carries an N-linked (GlcNAc...) asparagine glycan. Residues 44 to 64 (WPLIVIGISIMVVSLAGFAGA) traverse the membrane as a helical segment. The Cytoplasmic portion of the chain corresponds to 65–71 (CYRNKFL). A helical transmembrane segment spans residues 72–92 (MWLYLVVMLLIIAALIGFIIF). Over 93-235 (AYAVTDKGSG…LGSLKKSWRK (143 aa)) the chain is Extracellular. Asn-187 carries N-linked (GlcNAc...) asparagine glycosylation. Residues 236–256 (VSVINIVVLIILVIFYVIAYA) form a helical membrane-spanning segment. At 257 to 285 (AYRNVKRIDNDEPAGEARMTKSHPSHFHL) the chain is on the cytoplasmic side.

Belongs to the tetraspanin (TM4SF) family.

It is found in the cell membrane. May be involved in the regulation of cell differentiation. The polypeptide is Tetraspanin-3 (TET3) (Arabidopsis thaliana (Mouse-ear cress)).